Here is a 298-residue protein sequence, read N- to C-terminus: N-acetylmuramic acid 6-phosphate etherase (298 aa).

In terms of domain architecture, SIS spans 55–218 (IHAQVSGGGR…STGLMIKSGK (164 aa)). The active-site Proton donor is the Glu-83. Glu-114 is an active-site residue.

It belongs to the GCKR-like family. MurNAc-6-P etherase subfamily. As to quaternary structure, homodimer.

It catalyses the reaction N-acetyl-D-muramate 6-phosphate + H2O = N-acetyl-D-glucosamine 6-phosphate + (R)-lactate. Its pathway is amino-sugar metabolism; 1,6-anhydro-N-acetylmuramate degradation. It functions in the pathway amino-sugar metabolism; N-acetylmuramate degradation. It participates in cell wall biogenesis; peptidoglycan recycling. Its function is as follows. Specifically catalyzes the cleavage of the D-lactyl ether substituent of MurNAc 6-phosphate, producing GlcNAc 6-phosphate and D-lactate. Together with AnmK, is also required for the utilization of anhydro-N-acetylmuramic acid (anhMurNAc) either imported from the medium or derived from its own cell wall murein, and thus plays a role in cell wall recycling. The chain is N-acetylmuramic acid 6-phosphate etherase from Escherichia coli O7:K1 (strain IAI39 / ExPEC).